Reading from the N-terminus, the 98-residue chain is Integration host factor subunit alpha (98 aa).

The protein belongs to the bacterial histone-like protein family. As to quaternary structure, heterodimer of an alpha and a beta chain.

This protein is one of the two subunits of integration host factor, a specific DNA-binding protein that functions in genetic recombination as well as in transcriptional and translational control. This is Integration host factor subunit alpha from Mannheimia succiniciproducens (strain KCTC 0769BP / MBEL55E).